We begin with the raw amino-acid sequence, 400 residues long: Formate-dependent phosphoribosylglycinamide formyltransferase (400 aa).

N(1)-(5-phospho-beta-D-ribosyl)glycinamide-binding positions include E22–L23 and E82. ATP-binding positions include R115, K156, S161–Q166, E196–I199, and E204. In terms of domain architecture, ATP-grasp spans R120–L309. Mg(2+) contacts are provided by E268 and E280. N(1)-(5-phospho-beta-D-ribosyl)glycinamide-binding positions include D287, K361, and R368–R369.

This sequence belongs to the PurK/PurT family. In terms of assembly, homodimer.

The enzyme catalyses N(1)-(5-phospho-beta-D-ribosyl)glycinamide + formate + ATP = N(2)-formyl-N(1)-(5-phospho-beta-D-ribosyl)glycinamide + ADP + phosphate + H(+). Its pathway is purine metabolism; IMP biosynthesis via de novo pathway; N(2)-formyl-N(1)-(5-phospho-D-ribosyl)glycinamide from N(1)-(5-phospho-D-ribosyl)glycinamide (formate route): step 1/1. Functionally, involved in the de novo purine biosynthesis. Catalyzes the transfer of formate to 5-phospho-ribosyl-glycinamide (GAR), producing 5-phospho-ribosyl-N-formylglycinamide (FGAR). Formate is provided by PurU via hydrolysis of 10-formyl-tetrahydrofolate. The polypeptide is Formate-dependent phosphoribosylglycinamide formyltransferase (Xanthomonas axonopodis pv. citri (strain 306)).